Here is a 211-residue protein sequence, read N- to C-terminus: MRDPVETYMNLVPMVVEQTNRGERAYDIFSRLLKERIIFLTGPVEDGMSTLVVAQLLFLEAENPKKEISMYINSPGGVVTSGLAIYDTMQFIRPPVSTLCTGQAASMGSLLLCAGAKDMRFSLPNARIMVHQPSGGFQGQATDIMLHAQEILNLKKRLNEIYVKHTGQTYKAIEDALERDKFLTADMARDFGLVDKVIDKRPEEASPAKPV.

Serine 106 functions as the Nucleophile in the catalytic mechanism. Residue histidine 131 is part of the active site.

The protein belongs to the peptidase S14 family. Fourteen ClpP subunits assemble into 2 heptameric rings which stack back to back to give a disk-like structure with a central cavity, resembling the structure of eukaryotic proteasomes.

Its subcellular location is the cytoplasm. It carries out the reaction Hydrolysis of proteins to small peptides in the presence of ATP and magnesium. alpha-casein is the usual test substrate. In the absence of ATP, only oligopeptides shorter than five residues are hydrolyzed (such as succinyl-Leu-Tyr-|-NHMec, and Leu-Tyr-Leu-|-Tyr-Trp, in which cleavage of the -Tyr-|-Leu- and -Tyr-|-Trp bonds also occurs).. In terms of biological role, cleaves peptides in various proteins in a process that requires ATP hydrolysis. Has a chymotrypsin-like activity. Plays a major role in the degradation of misfolded proteins. This Rhodopseudomonas palustris (strain BisA53) protein is ATP-dependent Clp protease proteolytic subunit.